The chain runs to 206 residues: uncharacterized protein (206 aa).

This is an uncharacterized protein from Aquifex aeolicus (strain VF5).